A 309-amino-acid polypeptide reads, in one-letter code: Homoserine kinase (309 aa).

Position 91 to 101 (91 to 101 (PIGSGLGSSAC)) interacts with ATP.

This sequence belongs to the GHMP kinase family. Homoserine kinase subfamily.

Its subcellular location is the cytoplasm. It catalyses the reaction L-homoserine + ATP = O-phospho-L-homoserine + ADP + H(+). It functions in the pathway amino-acid biosynthesis; L-threonine biosynthesis; L-threonine from L-aspartate: step 4/5. Its function is as follows. Catalyzes the ATP-dependent phosphorylation of L-homoserine to L-homoserine phosphate. This chain is Homoserine kinase, found in Pectobacterium atrosepticum (strain SCRI 1043 / ATCC BAA-672) (Erwinia carotovora subsp. atroseptica).